Here is a 372-residue protein sequence, read N- to C-terminus: DNA polymerase delta subunit 3 (372 aa).

Disordered stretches follow at residues 156-264 (KKAP…NLDS) and 352-372 (KKNT…FGKK). The segment covering 160-173 (STHSPQLSVPSKTS) has biased composition (polar residues). At Ser163 the chain carries Phosphoserine. 2 stretches are compositionally biased toward basic and acidic residues: residues 174–190 (TIDK…KGKD) and 209–239 (APLE…DDLK). The span at 355–365 (TAQSKPQQKSI) shows a compositional bias: polar residues.

As to quaternary structure, heterotetramer that consist of the pol3, cdc1, cdc27 and cdm1 subunits. Cdc27 interacts with cdc1 and is required for dimerization of the tetramer.

The protein localises to the nucleus. This chain is DNA polymerase delta subunit 3 (cdc27), found in Schizosaccharomyces pombe (strain 972 / ATCC 24843) (Fission yeast).